We begin with the raw amino-acid sequence, 201 residues long: Probable molybdenum cofactor guanylyltransferase (201 aa).

Residues 16–18 (LAG), lysine 28, aspartate 75, and aspartate 107 each bind GTP. Position 107 (aspartate 107) interacts with Mg(2+).

Belongs to the MobA family. Mg(2+) is required as a cofactor.

Its subcellular location is the cytoplasm. The enzyme catalyses Mo-molybdopterin + GTP + H(+) = Mo-molybdopterin guanine dinucleotide + diphosphate. In terms of biological role, transfers a GMP moiety from GTP to Mo-molybdopterin (Mo-MPT) cofactor (Moco or molybdenum cofactor) to form Mo-molybdopterin guanine dinucleotide (Mo-MGD) cofactor. The polypeptide is Probable molybdenum cofactor guanylyltransferase (Mycobacterium marinum (strain ATCC BAA-535 / M)).